The sequence spans 255 residues: Small ribosomal subunit protein uS2 (255 aa).

It belongs to the universal ribosomal protein uS2 family.

This chain is Small ribosomal subunit protein uS2, found in Streptococcus thermophilus (strain ATCC BAA-491 / LMD-9).